A 409-amino-acid chain; its full sequence is uncharacterized protein (409 aa).

Transmembrane regions (helical) follow at residues 20 to 40, 283 to 303, 344 to 364, and 372 to 392; these read ILTM…VSML, FALL…IGVM, IGGI…TVIF, and IPAV…FGLL.

Belongs to the ABC-4 integral membrane protein family.

Its subcellular location is the cell membrane. This is an uncharacterized protein from Bacillus subtilis (strain 168).